The primary structure comprises 206 residues: Small ribosomal subunit protein uS4 (206 aa).

In terms of domain architecture, S4 RNA-binding spans 96-156; sequence GRLDNVVYRM…EKSKNQLRIQ (61 aa).

The protein belongs to the universal ribosomal protein uS4 family. In terms of assembly, part of the 30S ribosomal subunit. Contacts protein S5. The interaction surface between S4 and S5 is involved in control of translational fidelity.

Functionally, one of the primary rRNA binding proteins, it binds directly to 16S rRNA where it nucleates assembly of the body of the 30S subunit. With S5 and S12 plays an important role in translational accuracy. In Saccharophagus degradans (strain 2-40 / ATCC 43961 / DSM 17024), this protein is Small ribosomal subunit protein uS4.